The sequence spans 343 residues: Dihydroorotate dehydrogenase (quinone) (343 aa).

Residues 58–62 (AGYDK) and serine 82 each bind FMN. Residue lysine 62 coordinates substrate. Residue 107–111 (NRMGF) participates in substrate binding. FMN is bound by residues asparagine 136 and asparagine 167. Asparagine 167 contributes to the substrate binding site. Serine 170 acts as the Nucleophile in catalysis. Asparagine 172 contacts substrate. Residues lysine 206 and serine 234 each coordinate FMN. 235–236 (NT) contributes to the substrate binding site. FMN contacts are provided by residues glycine 256, glycine 285, and 306-307 (YS).

It belongs to the dihydroorotate dehydrogenase family. Type 2 subfamily. Monomer. FMN serves as cofactor.

It localises to the cell membrane. The enzyme catalyses (S)-dihydroorotate + a quinone = orotate + a quinol. It functions in the pathway pyrimidine metabolism; UMP biosynthesis via de novo pathway; orotate from (S)-dihydroorotate (quinone route): step 1/1. Its function is as follows. Catalyzes the conversion of dihydroorotate to orotate with quinone as electron acceptor. The sequence is that of Dihydroorotate dehydrogenase (quinone) from Erythrobacter litoralis (strain HTCC2594).